Consider the following 674-residue polypeptide: ATP-dependent DNA helicase Hel308 (674 aa).

Residues Q27 and 44-51 each bind ATP; that span reads VPTAAGKT. The region spanning 31 to 197 is the Helicase ATP-binding domain; that stretch reads IEQIRKGRNV…WLDASLIKSD (167 aa). The DEAH box signature appears at 142-145; the sequence is DEIH. The Helicase C-terminal domain occupies 224–411; the sequence is SINQIIRETV…EAKVRFNTLA (188 aa).

It belongs to the helicase family. Hel308 subfamily. As to quaternary structure, monomer.

The enzyme catalyses Couples ATP hydrolysis with the unwinding of duplex DNA by translocating in the 3'-5' direction.. The catalysed reaction is ATP + H2O = ADP + phosphate + H(+). Functionally, DNA-dependent ATPase and 3'-5' DNA helicase that may be involved in repair of stalled replication forks. This chain is ATP-dependent DNA helicase Hel308, found in Thermoplasma acidophilum (strain ATCC 25905 / DSM 1728 / JCM 9062 / NBRC 15155 / AMRC-C165).